The chain runs to 95 residues: MLHTLHRSPWLTDFAALLRLLSEGDELLLLQDGVTAGVDGNCYLESLRNAPIKVYALNEDLIARGLTGRISNDIIPIDYTDFVRLTVKHSSQMAW.

The protein belongs to the DsrH/TusB family. In terms of assembly, heterohexamer, formed by a dimer of trimers. The hexameric TusBCD complex contains 2 copies each of TusB, TusC and TusD. The TusBCD complex interacts with TusE.

It localises to the cytoplasm. In terms of biological role, part of a sulfur-relay system required for 2-thiolation of 5-methylaminomethyl-2-thiouridine (mnm(5)s(2)U) at tRNA wobble positions. In Escherichia coli (strain SMS-3-5 / SECEC), this protein is Protein TusB.